Reading from the N-terminus, the 254-residue chain is Chalcone isomerase cfoK (254 aa).

Residues histidine 33 and tyrosine 50 contribute to the active site.

It catalyses the reaction a chalcone = a flavanone.. The protein operates within secondary metabolite biosynthesis; flavonoid biosynthesis. In terms of biological role, chalcone isomerase; part of the gene cluster that mediates the biosynthesis of chlorflavonin, a fungal flavonoid with acetolactate synthase inhibitory activity. Within the pathway, cfoK acts as chalcone isomerase (CHI), the key enzyme responsible for the tricyclic formation of flavanone through Michael-type intramolecular cyclization of chalcone. The hydrogen at C2'-OH is extracted by the imidazole ring of His-33, which induces the oxa-Michael addition to form the intermediate enolate through 6-endo-trig mode cyclization. The enolate can then be stabilized by a hydrogen bond with the Tyr-50 residue. Following enol tautomerization, the C ring, a gamma-pyranone ring, is formed. The pathway begins with the PKS-NRPS hybrid synthetase cfoA that uses benzoic acid or p-hydroxybenzoic acid as a starter unit with four rounds of chain elongation using malonyl-CoA to form the chalcone skeleton. Then, a new type of chalcone isomerase, cfoK, catalyzes the conversion of the chalcone into a flavanone by a histidine-mediated oxa-Michael addition mechanism. The desaturation of flavanone to flavone is catalyzed by a new type of flavone synthase, the flavin mononucleotide (FMN)-dependent oxidoreductase cfoJ. Monooxygenases cfoF, cfoG, and P450 cfoH are responsible for the hydroxylation of the flavonoid skeleton at sites C3, C8, and C2', respectively. Like cfoF, the dehydratase cfoI plays also a role in the hydroxylation of position C3. Methyltransferases cfoB, cfoC, and cfoD then catalyze the methylation of C7-OH, C8-OH, and C3-OH, respectively. Finally, the monooxygenase cfoE is responsible for the chlorination of flavonoid at position C3'. In Aspergillus candidus, this protein is Chalcone isomerase cfoK.